A 634-amino-acid chain; its full sequence is Chaperone protein DnaK (634 aa).

Position 198 is a phosphothreonine; by autocatalysis (threonine 198). Residues 599 to 634 (KQTQEGAEAASEAGEQSAGDEGVVDAEFEEVDEQNK) form a disordered region. The segment covering 602–619 (QEGAEAASEAGEQSAGDE) has biased composition (low complexity). Residues 620–634 (GVVDAEFEEVDEQNK) show a composition bias toward acidic residues.

The protein belongs to the heat shock protein 70 family.

In terms of biological role, acts as a chaperone. This is Chaperone protein DnaK from Syntrophotalea carbinolica (strain DSM 2380 / NBRC 103641 / GraBd1) (Pelobacter carbinolicus).